The chain runs to 224 residues: Urease accessory protein UreF (224 aa).

Belongs to the UreF family. UreD, UreF and UreG form a complex that acts as a GTP-hydrolysis-dependent molecular chaperone, activating the urease apoprotein by helping to assemble the nickel containing metallocenter of UreC. The UreE protein probably delivers the nickel.

The protein localises to the cytoplasm. Functionally, required for maturation of urease via the functional incorporation of the urease nickel metallocenter. The protein is Urease accessory protein UreF of Methylorubrum populi (strain ATCC BAA-705 / NCIMB 13946 / BJ001) (Methylobacterium populi).